The chain runs to 312 residues: Aspartoacylase (312 aa).

Zn(2+) is bound by residues His-20 and Glu-23. N-acetyl-L-aspartate-binding residues include Arg-62, Asn-69, and Arg-70. His-115 contributes to the Zn(2+) binding site. Residues Tyr-163 and Arg-167 each contribute to the N-acetyl-L-aspartate site. Glu-177 functions as the Proton donor/acceptor in the catalytic mechanism. Residue Tyr-287 coordinates N-acetyl-L-aspartate.

Belongs to the AspA/AstE family. Aspartoacylase subfamily. Homodimer. Zn(2+) is required as a cofactor.

Its subcellular location is the cytoplasm. It is found in the nucleus. It catalyses the reaction an N-acyl-L-aspartate + H2O = a carboxylate + L-aspartate. The enzyme catalyses N-acetyl-L-aspartate + H2O = L-aspartate + acetate. Its function is as follows. Catalyzes the deacetylation of N-acetylaspartic acid (NAA) to produce acetate and L-aspartate. NAA occurs in high concentration in brain and its hydrolysis NAA plays a significant part in the maintenance of intact white matter. In other tissues it acts as a scavenger of NAA from body fluids. This Mus musculus (Mouse) protein is Aspartoacylase.